The primary structure comprises 323 residues: Arginase-1 (323 aa).

The disordered stretch occupies residues 1–27; it reads MSSKPKPIEIIGAPFSKGQPRGGVEKG. Position 17 is an N6-succinyllysine (Lys-17). Ser-62 and Ser-72 each carry phosphoserine. The residue at position 75 (Lys-75) is an N6-succinyllysine. His-101, Asp-124, His-126, and Asp-128 together coordinate Mn(2+). Substrate is bound by residues 126-130 and 137-139; these read HTDIN and SGN. Ser-163 carries the phosphoserine modification. Residue Asp-183 coordinates substrate. Ser-217 is modified (phosphoserine). Mn(2+) contacts are provided by Asp-232 and Asp-234. The substrate site is built by Thr-246 and Glu-277. A Phosphothreonine modification is found at Thr-281.

This sequence belongs to the arginase family. In terms of assembly, homotrimer. Interacts with CMTM6. Mn(2+) is required as a cofactor. As to expression, detected in liver (at protein level).

It is found in the cytoplasm. Its subcellular location is the cytoplasmic granule. The enzyme catalyses L-arginine + H2O = urea + L-ornithine. Its pathway is nitrogen metabolism; urea cycle; L-ornithine and urea from L-arginine: step 1/1. Its activity is regulated as follows. Inactivated by diethyl pyrocarbonate (DEPC). Key element of the urea cycle converting L-arginine to urea and L-ornithine, which is further metabolized into metabolites proline and polyamides that drive collagen synthesis and bioenergetic pathways critical for cell proliferation, respectively; the urea cycle takes place primarily in the liver and, to a lesser extent, in the kidneys. Its function is as follows. Functions in L-arginine homeostasis in nonhepatic tissues characterized by the competition between nitric oxide synthase (NOS) and arginase for the available intracellular substrate arginine. Arginine metabolism is a critical regulator of innate and adaptive immune responses. Involved in an antimicrobial effector pathway in polymorphonuclear granulocytes (PMN). Upon PMN cell death is liberated from the phagolysosome and depletes arginine in the microenvironment leading to suppressed T cell and natural killer (NK) cell proliferation and cytokine secretion. In group 2 innate lymphoid cells (ILC2s) promotes acute type 2 inflammation in the lung and is involved in optimal ILC2 proliferation but not survival. Plays a role in the immune response of alternatively activated or M2 macrophages in processes such as wound healing and tissue regeneration, immune defense against multicellular pathogens and parasites, and immune suppression and allergic inflammation; the regulatory outcome seems to be organ specific. In tumor-infiltrating dendritic cells (DCs) and myeloid-derived suppressor cells (MDSCs) plays a role in suppression of T cell-mediated antitumor immunity. The polypeptide is Arginase-1 (Arg1) (Rattus norvegicus (Rat)).